The following is a 420-amino-acid chain: Aminoacyltransferase FemA (420 aa).

The protein belongs to the FemABX family. Homodimer. Interacts with FemB.

The protein localises to the cytoplasm. The catalysed reaction is beta-D-GlcNAc-(1-&gt;4)-Mur2Ac(oyl-L-Ala-D-isoglutaminyl-L-Lys-(N(6)-Gly)-D-Ala-D-Ala)-di-trans,octa-cis-undecaprenyl diphosphate + 2 glycyl-tRNA(Gly) = MurNAc-L-Ala-D-isoglutaminyl-L-Lys-(N(6)-tri-Gly)-D-Ala-D-Ala-diphospho-di-trans,octa-cis-undecaprenyl-GlcNAc + 2 tRNA(Gly) + 2 H(+). Functionally, catalyzes the formation of the pentaglycine interpeptide bridge, which is characteristic of the S.aureus peptidoglycan. Adds glycines 2 and 3 of the pentaglycine bridge, using glycyl-tRNA(Gly) as donor. Involved in resistance to methicillin. The chain is Aminoacyltransferase FemA (femA) from Staphylococcus aureus (strain NCTC 8325 / PS 47).